Reading from the N-terminus, the 206-residue chain is 3-demethoxyubiquinol 3-hydroxylase (206 aa).

Fe cation contacts are provided by glutamate 55, glutamate 85, histidine 88, glutamate 137, glutamate 169, and histidine 172.

The protein belongs to the COQ7 family. Requires Fe cation as cofactor.

It localises to the cell membrane. It catalyses the reaction a 5-methoxy-2-methyl-3-(all-trans-polyprenyl)benzene-1,4-diol + AH2 + O2 = a 3-demethylubiquinol + A + H2O. The protein operates within cofactor biosynthesis; ubiquinone biosynthesis. Catalyzes the hydroxylation of 2-nonaprenyl-3-methyl-6-methoxy-1,4-benzoquinol during ubiquinone biosynthesis. The sequence is that of 3-demethoxyubiquinol 3-hydroxylase from Aromatoleum aromaticum (strain DSM 19018 / LMG 30748 / EbN1) (Azoarcus sp. (strain EbN1)).